A 332-amino-acid polypeptide reads, in one-letter code: Probable ABC transporter permease protein YphD (332 aa).

Transmembrane regions (helical) follow at residues 28-48 (GLLV…PGFI), 63-83 (IGIA…DVSV), 84-104 (GPMV…EVPL), 105-125 (AVAC…AGVL), 131-151 (VPSF…GLFM), 172-192 (FLGV…FVFI), 222-242 (VRIL…ILLA), 251-271 (GAAN…GTAL), 278-298 (LFGT…LVLL), and 303-323 (FFQQ…NILL).

Belongs to the binding-protein-dependent transport system permease family. AraH/RbsC subfamily.

It is found in the cell inner membrane. Its function is as follows. Probably part of the binding-protein-dependent transport system YphDEF. Probably responsible for the translocation of the substrate across the membrane. The chain is Probable ABC transporter permease protein YphD (yphD) from Escherichia coli (strain K12).